We begin with the raw amino-acid sequence, 558 residues long: Kelch-like protein 23 (558 aa).

The BTB domain occupies 36–104 (TDITLQCPSG…AYTSQIEITE (69 aa)). The BACK domain occupies 139 to 240 (CIGMHSFAEF…DPVYLKTALG (102 aa)). Kelch repeat units follow at residues 274 to 320 (TMYI…CLGP), 321 to 369 (NIYV…TLGG), 370 to 416 (CVYA…VLHD), 418 to 466 (IYVI…PLEN), 467 to 508 (KLYL…IMNG), and 510 to 557 (IYVT…CVYN).

In Pongo abelii (Sumatran orangutan), this protein is Kelch-like protein 23 (KLHL23).